The chain runs to 209 residues: Small ribosomal subunit protein uS5 (209 aa).

One can recognise an S5 DRBM domain in the interval 48 to 111; that stretch reads LEDEVLDINM…DAAKLNITYI (64 aa).

Belongs to the universal ribosomal protein uS5 family. In terms of assembly, part of the 30S ribosomal subunit. Contacts protein S4.

With S4 and S12 plays an important role in translational accuracy. In Methanosarcina acetivorans (strain ATCC 35395 / DSM 2834 / JCM 12185 / C2A), this protein is Small ribosomal subunit protein uS5.